The primary structure comprises 251 residues: Tritrans,polycis-undecaprenyl-diphosphate synthase (geranylgeranyl-diphosphate specific) (251 aa).

Aspartate 29 is a catalytic residue. Residue aspartate 29 participates in Mg(2+) binding. Substrate is bound by residues 30–33, phenylalanine 34, histidine 46, and 74–76; these read GNRR and STE. Asparagine 77 serves as the catalytic Proton acceptor. Substrate-binding positions include phenylalanine 78, arginine 80, arginine 200, and 206 to 208; that span reads RLS.

This sequence belongs to the UPP synthase family. Homodimer. It depends on Mg(2+) as a cofactor.

It catalyses the reaction geranylgeranyl diphosphate + 7 isopentenyl diphosphate = tri-trans,hepta-cis-undecaprenyl diphosphate + 7 diphosphate. Functionally, catalyzes the sequential condensation of isopentenyl diphosphate (IPP) with geranylgeranyl diphosphate (GGPP) to yield (2Z,6Z,10Z,14Z,18Z,22Z,26Z,30E,34E,38E)-undecaprenyl diphosphate (tritrans,heptacis-UPP). It is probably the precursor of glycosyl carrier lipids. This chain is Tritrans,polycis-undecaprenyl-diphosphate synthase (geranylgeranyl-diphosphate specific), found in Archaeoglobus fulgidus (strain ATCC 49558 / DSM 4304 / JCM 9628 / NBRC 100126 / VC-16).